Here is a 502-residue protein sequence, read N- to C-terminus: Potassium channel KAT3 (502 aa).

The Cytoplasmic portion of the chain corresponds to 1-67 (MPRSSRMNLW…PYDPRYKVWE (67 aa)). The chain crosses the membrane as a helical span at residues 68–88 (TFLIILVVYSAWICPLEFAFL). Over 89–95 (RYLPSAP) the chain is Extracellular. Residues 96–116 (FVVDDVVNGFFAVDIMLTFFV) traverse the membrane as a helical segment. Over 117–138 (PFVDKKSYLLVNDPKKIAVRYL) the chain is Cytoplasmic. The chain crosses the membrane as a helical span at residues 139-159 (SSWFVFDVCSTVPFHSISLLF). Residues 160-169 (NEHGHDLGFK) are Extracellular-facing. A helical; Voltage-sensor membrane pass occupies residues 170–190 (FLNVLRLWRLRRVSSMFARLE). At 191–204 (KDIRFNYAVIRCTK) the chain is on the cytoplasmic side. Residues 205–225 (LISVTLFAIHCAGCINYLIAD) form a helical membrane-spanning segment. Residues 226–252 (RYPDPRRTWIGAVMPNFREDGLWIRYV) are Extracellular-facing. Positions 253–272 (TAMYWSITTLTTTGYGDLHA) form an intramembrane region, pore-forming. The Extracellular segment spans residues 273–276 (ENAR). The helical transmembrane segment at 277-297 (EMLFGICYMLFNLWLTAYLIG) threads the bilayer. At 298 to 502 (NMTNLVVHST…IRSNLQQVNV (205 aa)) the chain is on the cytoplasmic side. 381–500 (LFKGVSSRFI…DIIRSNLQQV (120 aa)) lines the a nucleoside 3',5'-cyclic phosphate pocket.

The protein belongs to the potassium channel family. Plant (TC 1.A.1.4) subfamily.

The protein localises to the membrane. In terms of biological role, probable inward-rectifying potassium channel. Assuming opened or closed conformations in response to the voltage difference across the membrane, the channel is activated by hyperpolarization. The polypeptide is Potassium channel KAT3 (Oryza sativa subsp. japonica (Rice)).